The primary structure comprises 156 residues: Ribosome maturation factor RimP (156 aa).

It belongs to the RimP family.

Its subcellular location is the cytoplasm. Functionally, required for maturation of 30S ribosomal subunits. This chain is Ribosome maturation factor RimP, found in Synechococcus sp. (strain JA-2-3B'a(2-13)) (Cyanobacteria bacterium Yellowstone B-Prime).